The chain runs to 192 residues: Ion-translocating oxidoreductase complex subunit B (192 aa).

The hydrophobic stretch occupies residues 1 to 26 (MNTIWIAVGALTLLGLVFGAILGYAS). The 4Fe-4S domain maps to 32–91 (EDDPVVEKIDAILPQSQCGQCGYPGCRPYAEAVGLQGEKINRCAPGGEAVMLKIAELLNV). Cysteine 49, cysteine 52, cysteine 57, cysteine 74, cysteine 117, cysteine 120, cysteine 123, cysteine 127, cysteine 147, cysteine 150, cysteine 153, and cysteine 157 together coordinate [4Fe-4S] cluster. 2 4Fe-4S ferredoxin-type domains span residues 108–137 (MLAV…GATR) and 138–167 (AMHT…LRPV).

It belongs to the 4Fe4S bacterial-type ferredoxin family. RnfB subfamily. The complex is composed of six subunits: RsxA, RsxB, RsxC, RsxD, RsxE and RsxG. The cofactor is [4Fe-4S] cluster.

The protein localises to the cell inner membrane. Functionally, part of a membrane-bound complex that couples electron transfer with translocation of ions across the membrane. Required to maintain the reduced state of SoxR. In Salmonella dublin (strain CT_02021853), this protein is Ion-translocating oxidoreductase complex subunit B.